The sequence spans 718 residues: Polyribonucleotide nucleotidyltransferase (718 aa).

Residues aspartate 496 and aspartate 502 each contribute to the Mg(2+) site. In terms of domain architecture, KH spans 563 to 622 (PRLLTIKIDPDMIGLVIGPGGKTIKGITEETGAKIDIEDDGTVTISAVDENKAKRARNIV). An S1 motif domain is found at 632-700 (GDVYAGRVTR…NKGRINLTRL (69 aa)).

This sequence belongs to the polyribonucleotide nucleotidyltransferase family. Mg(2+) serves as cofactor.

The protein localises to the cytoplasm. The enzyme catalyses RNA(n+1) + phosphate = RNA(n) + a ribonucleoside 5'-diphosphate. Involved in mRNA degradation. Catalyzes the phosphorolysis of single-stranded polyribonucleotides processively in the 3'- to 5'-direction. The sequence is that of Polyribonucleotide nucleotidyltransferase from Trichormus variabilis (strain ATCC 29413 / PCC 7937) (Anabaena variabilis).